The sequence spans 141 residues: Phosphoribosyl-AMP cyclohydrolase (141 aa).

Asp88 lines the Mg(2+) pocket. Cys89 contacts Zn(2+). Residues Asp90 and Asp92 each coordinate Mg(2+). Cys109 and Cys116 together coordinate Zn(2+).

Belongs to the PRA-CH family. As to quaternary structure, homodimer. It depends on Mg(2+) as a cofactor. Zn(2+) is required as a cofactor.

It localises to the cytoplasm. The enzyme catalyses 1-(5-phospho-beta-D-ribosyl)-5'-AMP + H2O = 1-(5-phospho-beta-D-ribosyl)-5-[(5-phospho-beta-D-ribosylamino)methylideneamino]imidazole-4-carboxamide. The protein operates within amino-acid biosynthesis; L-histidine biosynthesis; L-histidine from 5-phospho-alpha-D-ribose 1-diphosphate: step 3/9. In terms of biological role, catalyzes the hydrolysis of the adenine ring of phosphoribosyl-AMP. This is Phosphoribosyl-AMP cyclohydrolase from Paracidovorax citrulli (strain AAC00-1) (Acidovorax citrulli).